Consider the following 321-residue polypeptide: MLFATLEHILTHISFSTISIVITIHLITLLVRELGGLRDSSEKGMIATFFCITGFLVSRWASSGHFPLSNLYESLIFLSWALYILHMIPKIQNSKNDLSTITTPSTILTQGFATSGLLTEMHQSTILVPALQSQWLMMHVSMMLLSYATLLCGSLLSAALLMIRFRKNLDFFSKKKKNVLSKTFFFNEIEYFYAKRSALKSTFFPLFPNYYKYQLIERLDSWSYRVISLGFTLLTIGILCGAVWANEAWGSYWNWDPKETWAFITWTIFAIYLHSRTNPNWKGTKSAFVASIGFLIIWICYFGINLLGIGLHSYGSFTLPI.

Helical transmembrane passes span 9–29, 44–64, 68–88, 143–163, 226–246, 260–274, and 289–309; these read ILTH…LITL, GMIA…ASSG, LSNL…LHMI, MLLS…LLMI, VISL…VWAN, TWAF…IYLH, and VASI…LLGI.

This sequence belongs to the CcmF/CycK/Ccl1/NrfE/CcsA family. In terms of assembly, may interact with Ccs1.

It is found in the plastid. The protein resides in the chloroplast thylakoid membrane. Its function is as follows. Required during biogenesis of c-type cytochromes (cytochrome c6 and cytochrome f) at the step of heme attachment. This Oryza sativa (Rice) protein is Cytochrome c biogenesis protein CcsA.